Here is a 491-residue protein sequence, read N- to C-terminus: Ketol-acid reductoisomerase (NADP(+)) (491 aa).

Positions 17–208 constitute a KARI N-terminal Rossmann domain; sequence LGKCRFMSRD…GGHRAGVLES (192 aa). Residues 45-48, arginine 68, arginine 76, serine 78, and 108-110 each bind NADP(+); these read CGAQ and DKQ. The active site involves histidine 132. Glycine 158 is an NADP(+) binding site. 2 consecutive KARI C-terminal knotted domains span residues 209 to 344 and 345 to 484; these read SFVA…NYPE and YEGK…MTDM. Mg(2+)-binding residues include aspartate 217, glutamate 221, glutamate 389, and glutamate 393. Serine 414 is a binding site for substrate.

It belongs to the ketol-acid reductoisomerase family. Mg(2+) serves as cofactor.

The catalysed reaction is (2R)-2,3-dihydroxy-3-methylbutanoate + NADP(+) = (2S)-2-acetolactate + NADPH + H(+). The enzyme catalyses (2R,3R)-2,3-dihydroxy-3-methylpentanoate + NADP(+) = (S)-2-ethyl-2-hydroxy-3-oxobutanoate + NADPH + H(+). It functions in the pathway amino-acid biosynthesis; L-isoleucine biosynthesis; L-isoleucine from 2-oxobutanoate: step 2/4. It participates in amino-acid biosynthesis; L-valine biosynthesis; L-valine from pyruvate: step 2/4. Involved in the biosynthesis of branched-chain amino acids (BCAA). Catalyzes an alkyl-migration followed by a ketol-acid reduction of (S)-2-acetolactate (S2AL) to yield (R)-2,3-dihydroxy-isovalerate. In the isomerase reaction, S2AL is rearranged via a Mg-dependent methyl migration to produce 3-hydroxy-3-methyl-2-ketobutyrate (HMKB). In the reductase reaction, this 2-ketoacid undergoes a metal-dependent reduction by NADPH to yield (R)-2,3-dihydroxy-isovalerate. In Proteus mirabilis (strain HI4320), this protein is Ketol-acid reductoisomerase (NADP(+)).